Reading from the N-terminus, the 271-residue chain is Extracellular metalloprotease ARB_05317 (271 aa).

The signal sequence occupies residues 1 to 19 (MRFSVLLTGLAAAGSIATA). Asn136 is a glycosylation site (N-linked (GlcNAc...) asparagine). His185 provides a ligand contact to Zn(2+). Glu186 is a catalytic residue. Zn(2+) is bound at residue His189. N-linked (GlcNAc...) asparagine glycosylation is present at Asn200. Cys222 and Cys248 form a disulfide bridge.

Belongs to the peptidase M43B family.

The protein localises to the secreted. Secreted metalloproteinase that allows assimilation of proteinaceous substrates. Plays a pivotal role as a pathogenicity determinant during infections and contributes to the ability of the pathogen to persist within the mammalian host. This chain is Extracellular metalloprotease ARB_05317, found in Arthroderma benhamiae (strain ATCC MYA-4681 / CBS 112371) (Trichophyton mentagrophytes).